We begin with the raw amino-acid sequence, 143 residues long: Transcriptional regulator MraZ (143 aa).

SpoVT-AbrB domains are found at residues 5 to 47 (TFTP…PRNV) and 76 to 119 (ADEQ…NAES).

Belongs to the MraZ family. Forms oligomers.

It localises to the cytoplasm. The protein resides in the nucleoid. This chain is Transcriptional regulator MraZ, found in Corynebacterium kroppenstedtii (strain DSM 44385 / JCM 11950 / CIP 105744 / CCUG 35717).